The sequence spans 898 residues: DNA-directed DNA polymerase (898 aa).

Positions 101 to 337 (YDRKFVRVAN…VQAIDKIRGF (237 aa)) are 3'-5'exonuclease. Mg(2+)-binding residues include D112, E114, and D219. Positions 245–261 (VKSKLIQNMYGSKEIYS) are beta hairpin. Residues D324, D408, and L409 each contribute to the Mg(2+) site. The tract at residues 377–898 (IPQQGSHVKQ…EKASLDFLFG (522 aa)) is polymerase. Substrate is bound by residues 411–413 (SLY), R479, and K557. A Mg(2+)-binding site is contributed by D620. The binding of DNA in B-conformation stretch occupies residues 702–705 (KKRY). Positions 893–898 (LDFLFG) are interaction with the polymerase clamp.

Belongs to the DNA polymerase type-B family. As to quaternary structure, interacts with the polymerase clamp; this interaction constitutes the polymerase holoenzyme. Interacts with the helicase assembly factor. Part of the replicase complex that includes the DNA polymerase, the polymerase clamp, the clamp loader complex, the single-stranded DNA binding protein, the primase, the helicase and the helicase assembly factor. Mg(2+) is required as a cofactor.

It catalyses the reaction DNA(n) + a 2'-deoxyribonucleoside 5'-triphosphate = DNA(n+1) + diphosphate. Its function is as follows. Replicates the viral genomic DNA. This polymerase possesses two enzymatic activities: DNA synthesis (polymerase) and an exonucleolytic activity that degrades single-stranded DNA in the 3'- to 5'-direction for proofreading purpose. The chain is DNA-directed DNA polymerase (43) from Enterobacteria phage T4 (Bacteriophage T4).